A 57-amino-acid polypeptide reads, in one-letter code: Small nuclear protein PRAC1 (57 aa).

Residues 38–57 form a disordered region; it reads RSDGSACNSGISGGRGRKIP.

Highly expressed in prostate, rectum, and distal colon, and weakly expressed in bladder. Expressed in prostate cancer cell lines.

Its subcellular location is the nucleus. The protein is Small nuclear protein PRAC1 (PRAC1) of Homo sapiens (Human).